The primary structure comprises 158 residues: Peptide deformylase (158 aa).

Residues Cys-88 and His-130 each contribute to the Fe cation site. Glu-131 is an active-site residue. His-134 contributes to the Fe cation binding site.

It belongs to the polypeptide deformylase family. Fe(2+) serves as cofactor.

It carries out the reaction N-terminal N-formyl-L-methionyl-[peptide] + H2O = N-terminal L-methionyl-[peptide] + formate. In terms of biological role, removes the formyl group from the N-terminal Met of newly synthesized proteins. Requires at least a dipeptide for an efficient rate of reaction. N-terminal L-methionine is a prerequisite for activity but the enzyme has broad specificity at other positions. The chain is Peptide deformylase from Agathobacter rectalis (strain ATCC 33656 / DSM 3377 / JCM 17463 / KCTC 5835 / VPI 0990) (Eubacterium rectale).